We begin with the raw amino-acid sequence, 545 residues long: CTP synthase (545 aa).

The segment at Met-1–Leu-266 is amidoligase domain. Ser-14 contacts CTP. Residue Ser-14 coordinates UTP. Residues Ser-15–Ile-20 and Asp-72 each bind ATP. Asp-72 and Glu-140 together coordinate Mg(2+). Residues Asp-147–Glu-149, Lys-187–Gln-192, and Lys-223 contribute to the CTP site. Residues Lys-187–Gln-192 and Lys-223 each bind UTP. Residue Lys-239–Val-241 participates in ATP binding. Residues Thr-291–Arg-542 enclose the Glutamine amidotransferase type-1 domain. Gly-352 provides a ligand contact to L-glutamine. The active-site Nucleophile; for glutamine hydrolysis is Cys-379. L-glutamine contacts are provided by residues Leu-380 to Gln-383, Glu-403, and Arg-470. Active-site residues include His-515 and Glu-517.

It belongs to the CTP synthase family. Homotetramer.

It carries out the reaction UTP + L-glutamine + ATP + H2O = CTP + L-glutamate + ADP + phosphate + 2 H(+). The catalysed reaction is L-glutamine + H2O = L-glutamate + NH4(+). It catalyses the reaction UTP + NH4(+) + ATP = CTP + ADP + phosphate + 2 H(+). It functions in the pathway pyrimidine metabolism; CTP biosynthesis via de novo pathway; CTP from UDP: step 2/2. Allosterically activated by GTP, when glutamine is the substrate; GTP has no effect on the reaction when ammonia is the substrate. The allosteric effector GTP functions by stabilizing the protein conformation that binds the tetrahedral intermediate(s) formed during glutamine hydrolysis. Inhibited by the product CTP, via allosteric rather than competitive inhibition. Its function is as follows. Catalyzes the ATP-dependent amination of UTP to CTP with either L-glutamine or ammonia as the source of nitrogen. Regulates intracellular CTP levels through interactions with the four ribonucleotide triphosphates. The chain is CTP synthase from Salmonella paratyphi A (strain ATCC 9150 / SARB42).